We begin with the raw amino-acid sequence, 454 residues long: Kynurenine--oxoglutarate transaminase 3 (454 aa).

Gly71 is a substrate binding site. Lys116 carries the N6-acetyllysine; alternate modification. Lys116 carries the post-translational modification N6-succinyllysine; alternate. Residue Asn218 coordinates substrate. The residue at position 280 (Lys280) is an N6-(pyridoxal phosphate)lysine. Arg429 serves as a coordination point for substrate.

Belongs to the class-I pyridoxal-phosphate-dependent aminotransferase family. In terms of assembly, homodimer. Pyridoxal 5'-phosphate is required as a cofactor.

The enzyme catalyses L-kynurenine + 2-oxoglutarate = kynurenate + L-glutamate + H2O. It catalyses the reaction L-kynurenine + glyoxylate = kynurenate + glycine + H2O. The catalysed reaction is 3-hydroxy-L-kynurenine + glyoxylate = xanthurenate + glycine + H2O. It carries out the reaction an S-substituted L-cysteine + H2O = a thiol + pyruvate + NH4(+). Its pathway is amino-acid degradation; L-kynurenine degradation; kynurenate from L-kynurenine: step 1/2. Its function is as follows. Catalyzes the irreversible transamination of the L-tryptophan metabolite L-kynurenine to form kynurenic acid (KA), an intermediate in the tryptophan catabolic pathway which is also a broad spectrum antagonist of the three ionotropic excitatory amino acid receptors among others. May catalyze the beta-elimination of S-conjugates and Se-conjugates of L-(seleno)cysteine, resulting in the cleavage of the C-S or C-Se bond. Has transaminase activity towards L-kynurenine, tryptophan, phenylalanine, serine, cysteine, methionine, histidine, glutamine and asparagine with glyoxylate as an amino group acceptor (in vitro). Has lower activity with 2-oxoglutarate as amino group acceptor (in vitro). This is Kynurenine--oxoglutarate transaminase 3 from Rattus norvegicus (Rat).